A 504-amino-acid polypeptide reads, in one-letter code: Protein Dok-7 (504 aa).

Positions 4–109 constitute a PH domain; the sequence is AALVEGQVKL…WDTRIRYALG (106 aa). The IRS-type PTB domain maps to 105–210; that stretch reads RYALGEVHRF…RGISPTKGPF (106 aa). 3 disordered regions span residues 210-232, 248-348, and 371-483; these read FGLRPVLPDPSSGGPSASEERVA, LSHS…HSSY, and SLLS…PHAG. Residues 263-280 are compositionally biased toward low complexity; it reads LSSSSSEASHSDISASSR. Polar residues-rich tracts occupy residues 285–297, 331–341, and 421–430; these read PEQSSSSAGTSQE, GRQSSSDSGIA, and PASQGSSDHG.

Homodimer. Forms a heterotetramer composed of 2 DOK7 and 2 MUSK molecules which facilitates MUSK trans-autophosphorylation on tyrosine residue and activation. Interacts (via IRS-type PTB domain) with MUSK (via cytoplasmic part); requires MUSK phosphorylation.

Its subcellular location is the cell membrane. It is found in the synapse. Probable muscle-intrinsic activator of MUSK that plays an essential role in neuromuscular synaptogenesis. Acts in aneural activation of MUSK and subsequent acetylcholine receptor (AchR) clustering in myotubes. Induces autophosphorylation of MUSK. This is Protein Dok-7 (Dok7) from Mus musculus (Mouse).